Here is a 390-residue protein sequence, read N- to C-terminus: Elongation factor Tu 2 (390 aa).

The tr-type G domain maps to K10–R201. Residues G19–T26 are G1. G19–T26 contacts GTP. Position 26 (T26) interacts with Mg(2+). A G2 region spans residues G55–A59. The segment at D76–G79 is G3. Residues D76–H80 and N131–D134 contribute to the GTP site. Residues N131–D134 form a G4 region. The tract at residues S168 to L170 is G5.

Belongs to the TRAFAC class translation factor GTPase superfamily. Classic translation factor GTPase family. EF-Tu/EF-1A subfamily. Monomer.

It localises to the cytoplasm. It catalyses the reaction GTP + H2O = GDP + phosphate + H(+). GTP hydrolase that promotes the GTP-dependent binding of aminoacyl-tRNA to the A-site of ribosomes during protein biosynthesis. The protein is Elongation factor Tu 2 of Wolbachia pipientis wMel.